A 398-amino-acid polypeptide reads, in one-letter code: Acetate kinase 1 (398 aa).

N10 provides a ligand contact to Mg(2+). Position 17 (K17) interacts with ATP. R89 serves as a coordination point for substrate. Residue D146 is the Proton donor/acceptor of the active site. ATP contacts are provided by residues 206–210 (HLGNG), 281–283 (DCR), and 329–333 (GIGEN). Residue E384 coordinates Mg(2+).

Belongs to the acetokinase family. Homodimer. It depends on Mg(2+) as a cofactor. Mn(2+) is required as a cofactor.

It localises to the cytoplasm. It carries out the reaction acetate + ATP = acetyl phosphate + ADP. It participates in metabolic intermediate biosynthesis; acetyl-CoA biosynthesis; acetyl-CoA from acetate: step 1/2. In terms of biological role, catalyzes the formation of acetyl phosphate from acetate and ATP. Can also catalyze the reverse reaction. The protein is Acetate kinase 1 of Neisseria meningitidis serogroup A / serotype 4A (strain DSM 15465 / Z2491).